Reading from the N-terminus, the 104-residue chain is MYAVIATGGKQYRVEKDEVLRLEKLPGQVGDTVSFDQILLFSDGESVSVGTPVLGNVTVSGKIVEQDRAKKILVFKTKRRKRYRRKQGHRQSFTAVRIETIQAG.

Belongs to the bacterial ribosomal protein bL21 family. Part of the 50S ribosomal subunit. Contacts protein L20.

In terms of biological role, this protein binds to 23S rRNA in the presence of protein L20. This is Large ribosomal subunit protein bL21 from Desulfosudis oleivorans (strain DSM 6200 / JCM 39069 / Hxd3) (Desulfococcus oleovorans).